Reading from the N-terminus, the 873-residue chain is Zinc fingers and homeoboxes protein 1 (873 aa).

Thr36 is subject to Phosphothreonine. A disordered region spans residues 41–63; it reads AKAESVSSDEEVHGSVDSDNQQN. Ser45, Ser47, and Ser48 each carry phosphoserine. Over residues 50–63 the composition is skewed to basic and acidic residues; sequence EEVHGSVDSDNQQN. C2H2-type zinc fingers lie at residues 70–93 and 102–125; these read YECK…DSEH and YVCV…LKYH. Lys159 participates in a covalent cross-link: Glycyl lysine isopeptide (Lys-Gly) (interchain with G-Cter in SUMO2). The interval 198–247 is disordered; that stretch reads VHHNSAEGTSEEKENGVKASQEENAESVSSSALESNTSTSTINRVHPSPA. Ser202 bears the Phosphoserine mark. Residues 223–238 show a composition bias toward low complexity; sequence ESVSSSALESNTSTST. Positions 272 to 432 are required for dimerization; sequence NSNLLPKVLI…QTNVQKSQVP (161 aa). The segment at 272–564 is required for interaction with NFYA; it reads NSNLLPKVLI…SQQKQSWNPF (293 aa). A DNA-binding region (homeobox 1) is located at residues 284 to 346; it reads NSIPTYNAAL…LKHGVSWTPE (63 aa). The interval 429-456 is disordered; it reads SQVPAAQPATDTKPATAAVPSSPSVRPE. Residues Lys441 and Lys485 each participate in a glycyl lysine isopeptide (Lys-Gly) (interchain with G-Cter in SUMO2) cross-link. A DNA-binding region (homeobox 2) is located at residues 464–526; the sequence is SFGIRAKKTK…YNQRNSKSNQ (63 aa). Disordered stretches follow at residues 541-568, 627-668, and 731-767; these read DSSD…PDFA, DEKI…CKKT, and SSSL…KRMN. Residues 569–630 constitute a DNA-binding region (homeobox 3); sequence PQKFKEKTAE…KTKALKDEKI (62 aa). A Glycyl lysine isopeptide (Lys-Gly) (interchain with G-Cter in SUMO2) cross-link involves residue Lys629. Ser648 is subject to Phosphoserine. Residues 660–722 constitute a DNA-binding region (homeobox 4); it reads GTGKICKKTP…YAWKNGNLKW (63 aa). Residues 734–768 are required for nuclear localization; sequence LNGLSSLRRRGRGRPKGRGRGRPRGRPRGGKRMNT. Over residues 740–764 the composition is skewed to basic residues; that stretch reads LRRRGRGRPKGRGRGRPRGRPRGGK. Ser774 is modified (phosphoserine). The homeobox 5 DNA-binding region spans 777-832; the sequence is KFKTGTAILKDYYLKHKFLNEQDLDELVNRSHMGYEQVREWFAERQRRSELGIELF. Residues 829 to 873 are disordered; sequence IELFEENEEEDEVVDDQEEDEEETDDSDTWEPPRHVKRKLSKSDD. Residues 831–857 are compositionally biased toward acidic residues; that stretch reads LFEENEEEDEVVDDQEEDEEETDDSDT. The interval 831–873 is required for repressor activity; it reads LFEENEEEDEVVDDQEEDEEETDDSDTWEPPRHVKRKLSKSDD. Over residues 863–873 the composition is skewed to basic residues; that stretch reads HVKRKLSKSDD.

Belongs to the ZHX family. As to quaternary structure, forms homodimers. Heterodimer (via HD1 domain) with ZHX2 (via HD1 domain). Also forms a heterodimer with ZHX3 which is a prerequisite for repressor activity. Interacts with ATF7IP and NFYA. Interacts (via homeobox domains) with DNMT3B (via PWWP domain). As to expression, widely expressed with highest levels in brain.

It localises to the nucleus. Its function is as follows. Acts as a transcriptional repressor. Increases DNMT3B-mediated repressive transcriptional activity when DNMT3B is tethered to DNA. May link molecule between DNMT3B and other co-repressor proteins. This chain is Zinc fingers and homeoboxes protein 1 (Zhx1), found in Mus musculus (Mouse).